The sequence spans 558 residues: 5-aminolevulinate synthase, mitochondrial (558 aa).

The transit peptide at 1–25 directs the protein to the mitochondrion; the sequence is MERVVKLAAKHCPFVSKADPSALRR. The tract at residues 103–124 is disordered; sequence TTTPVTKKHQMPKHYASDLNGV. Substrate contacts are provided by R152, S265, and K284. 3 residues coordinate pyridoxal 5'-phosphate: S317, H345, and T374. K377 is an active-site residue. The residue at position 377 (K377) is an N6-(pyridoxal phosphate)lysine. Pyridoxal 5'-phosphate is bound by residues T406 and T407. T492 is a binding site for substrate.

This sequence belongs to the class-II pyridoxal-phosphate-dependent aminotransferase family. As to quaternary structure, homodimer. Pyridoxal 5'-phosphate is required as a cofactor.

The protein resides in the mitochondrion matrix. The enzyme catalyses succinyl-CoA + glycine + H(+) = 5-aminolevulinate + CO2 + CoA. It participates in porphyrin-containing compound metabolism; protoporphyrin-IX biosynthesis; 5-aminolevulinate from glycine: step 1/1. Catalyzes the synthesis of 5-aminolevulinate (ALA) from succinyl-CoA and glycine, the first and rate-limiting step in heme biosynthesis. This is 5-aminolevulinate synthase, mitochondrial from Schizosaccharomyces pombe (strain 972 / ATCC 24843) (Fission yeast).